A 515-amino-acid polypeptide reads, in one-letter code: Protein DETOXIFICATION 32 (515 aa).

Residues 1 to 26 are compositionally biased toward basic and acidic residues; it reads METLNVDHEDTISSEQEHRAHTKSDT. Positions 1–30 are disordered; the sequence is METLNVDHEDTISSEQEHRAHTKSDTDMPP. 12 consecutive transmembrane segments (helical) span residues 48–68, 90–110, 131–151, 167–187, 194–214, 225–245, 276–296, 303–323, 347–367, 392–412, 418–438, and 448–468; these read LWWLAGPAIFTSFCQYSLGAV, VISGFSVGIMLGMGSALATLC, IILNSCALLLCLFYVFATPLL, FSLWMIPQLFAYAVNFATAKF, VIAMAVIAATVLLQHTLLSWL, GGAVVLNMSWWLIDVTQIVYI, AVMVCLEVWYFMALILFAGYL, VAALSICMNILGWPIMVAFGF, LIVAMITSVSIGIVISVTLIV, LLALTIVINNIQPVLSGVAVG, IVAYVNIGCYYLCGIPIGLVL, and GIWTGMLTGTVVQTSVLLFII. Residues 488–497 are compositionally biased toward basic and acidic residues; that stretch reads GDQSNKREEI. The tract at residues 488–515 is disordered; it reads GDQSNKREEIDLCEEDENNSNGENNHRK. Low complexity predominate over residues 506–515; it reads NSNGENNHRK.

This sequence belongs to the multi antimicrobial extrusion (MATE) (TC 2.A.66.1) family.

It localises to the membrane. This chain is Protein DETOXIFICATION 32, found in Arabidopsis thaliana (Mouse-ear cress).